A 199-amino-acid chain; its full sequence is NADH-quinone oxidoreductase subunit C (199 aa).

Belongs to the complex I 30 kDa subunit family. As to quaternary structure, NDH-1 is composed of 14 different subunits. Subunits NuoB, C, D, E, F, and G constitute the peripheral sector of the complex.

It is found in the cell inner membrane. It carries out the reaction a quinone + NADH + 5 H(+)(in) = a quinol + NAD(+) + 4 H(+)(out). NDH-1 shuttles electrons from NADH, via FMN and iron-sulfur (Fe-S) centers, to quinones in the respiratory chain. The immediate electron acceptor for the enzyme in this species is believed to be ubiquinone. Couples the redox reaction to proton translocation (for every two electrons transferred, four hydrogen ions are translocated across the cytoplasmic membrane), and thus conserves the redox energy in a proton gradient. In Polynucleobacter necessarius subsp. necessarius (strain STIR1), this protein is NADH-quinone oxidoreductase subunit C.